A 736-amino-acid chain; its full sequence is Subtilisin-like protease SBT4.6 (736 aa).

Residues 1-24 (MATAVSYCLLSCIFALLVVSFASA) form the signal peptide. Residues 25–111 (GKDDQDKQVY…VFPSKNLNLQ (87 aa)) constitute a propeptide, activation peptide. In terms of domain architecture, Inhibitor I9 spans 33-110 (VYIVYMGALP…SVFPSKNLNL (78 aa)). A Peptidase S8 domain is found at 115–589 (SWNFMGLKEG…AGHVDPIAAI (475 aa)). The Charge relay system role is filled by aspartate 143. A glycan (N-linked (GlcNAc...) asparagine) is linked at asparagine 174. The active-site Charge relay system is histidine 204. Asparagine 227 is a glycosylation site (N-linked (GlcNAc...) asparagine). The PA domain maps to 362–442 (KYPLVYGKSA…PVSVLSEDDY (81 aa)). Asparagine 450 is a glycosylation site (N-linked (GlcNAc...) asparagine). Serine 527 acts as the Charge relay system in catalysis. Residues asparagine 564, asparagine 598, asparagine 610, and asparagine 668 are each glycosylated (N-linked (GlcNAc...) asparagine).

Belongs to the peptidase S8 family. Post-translationally, the C-terminal propeptide is autocleaved.

The protein resides in the secreted. This is Subtilisin-like protease SBT4.6 from Arabidopsis thaliana (Mouse-ear cress).